The sequence spans 352 residues: Ly6/PLAUR domain-containing protein 3 (352 aa).

An N-terminal signal peptide occupies residues 1–32; the sequence is MDAARRGDTQPVMWTTRWLLLLPLLLCEGAQA. One can recognise a UPAR/Ly6 1 domain in the interval 35–128; the sequence is CYSCVQKADD…LNLTLRGLNP (94 aa). N-linked (GlcNAc...) asparagine glycosylation is found at Asn120, Asn131, Asn178, and Asn185. Residues 142–224 form the UPAR/Ly6 2 domain; that stretch reads CYSCMGLSRE…GSCCQGPRCN (83 aa). Residues 236–249 are compositionally biased toward pro residues; the sequence is RIPPLVLLPPPTTP. Residues 236 to 330 are disordered; sequence RIPPLVLLPP…KGGAQIPSKG (95 aa). Residues 250-285 show a composition bias toward low complexity; that stretch reads APSTRTQNSSSTTSTTAPTTATTTIKPTTVQASHTS. Basic and acidic residues-rich tracts occupy residues 286–300 and 309–320; these read STHETEHEVIQEEGS and HQDRSNMGKFPE. The GPI-anchor amidated glycine moiety is linked to residue Gly330. The propeptide at 331–352 is removed in mature form; it reads GSDALGSWLSAILLTVVAGAML.

As to quaternary structure, interacts with AGR2 and AGR3. Binds laminin-1 and laminin-5. Interacts with LGALS3. As to expression, found predominantly on the basal layers of squamous epithelium. Expressed in the gravid uterus and on epithelial of the upper gastrointestinal tract. It has been found in tumor lines which metastasize via the lymphatic system.

The protein localises to the cell membrane. In terms of biological role, supports cell migration. May be involved in tumor progression. This chain is Ly6/PLAUR domain-containing protein 3 (Lypd3), found in Rattus norvegicus (Rat).